Consider the following 383-residue polypeptide: Succinyl-diaminopimelate desuccinylase (383 aa).

Residue His-73 participates in Zn(2+) binding. Asp-75 is a catalytic residue. Residue Asp-107 coordinates Zn(2+). Glu-141 serves as the catalytic Proton acceptor. Glu-142, Glu-170, and His-356 together coordinate Zn(2+).

This sequence belongs to the peptidase M20A family. DapE subfamily. As to quaternary structure, homodimer. Zn(2+) is required as a cofactor. The cofactor is Co(2+).

It carries out the reaction N-succinyl-(2S,6S)-2,6-diaminopimelate + H2O = (2S,6S)-2,6-diaminopimelate + succinate. It functions in the pathway amino-acid biosynthesis; L-lysine biosynthesis via DAP pathway; LL-2,6-diaminopimelate from (S)-tetrahydrodipicolinate (succinylase route): step 3/3. Functionally, catalyzes the hydrolysis of N-succinyl-L,L-diaminopimelic acid (SDAP), forming succinate and LL-2,6-diaminopimelate (DAP), an intermediate involved in the bacterial biosynthesis of lysine and meso-diaminopimelic acid, an essential component of bacterial cell walls. The sequence is that of Succinyl-diaminopimelate desuccinylase from Pseudomonas syringae pv. tomato (strain ATCC BAA-871 / DC3000).